The sequence spans 347 residues: NADH-quinone oxidoreductase subunit H (347 aa).

8 helical membrane passes run 25–45 (ILFM…VAAM), 95–115 (FMFT…FAII), 128–148 (IGIL…LFGG), 168–188 (ISYE…TGSF), 200–220 (GWYI…GVAV), 251–271 (FFIG…CLFF), 284–304 (FIPP…MFIL), and 324–344 (VCLP…LIFS).

Belongs to the complex I subunit 1 family. As to quaternary structure, NDH-1 is composed of 14 different subunits. Subunits NuoA, H, J, K, L, M, N constitute the membrane sector of the complex.

The protein localises to the cell inner membrane. The enzyme catalyses a quinone + NADH + 5 H(+)(in) = a quinol + NAD(+) + 4 H(+)(out). In terms of biological role, NDH-1 shuttles electrons from NADH, via FMN and iron-sulfur (Fe-S) centers, to quinones in the respiratory chain. The immediate electron acceptor for the enzyme in this species is believed to be ubiquinone. Couples the redox reaction to proton translocation (for every two electrons transferred, four hydrogen ions are translocated across the cytoplasmic membrane), and thus conserves the redox energy in a proton gradient. This subunit may bind ubiquinone. The polypeptide is NADH-quinone oxidoreductase subunit H (Psychrobacter arcticus (strain DSM 17307 / VKM B-2377 / 273-4)).